We begin with the raw amino-acid sequence, 142 residues long: Hemoglobin subunit alpha-A (142 aa).

A Globin domain is found at 2–142 (VLSAADKTNV…VGAVLTAKYR (141 aa)). H59 contacts O2. H88 provides a ligand contact to heme b.

This sequence belongs to the globin family. Heterotetramer of two alpha chains and two beta chains. In terms of tissue distribution, red blood cells.

Involved in oxygen transport from the lung to the various peripheral tissues. The polypeptide is Hemoglobin subunit alpha-A (HBAA) (Cairina moschata (Muscovy duck)).